The primary structure comprises 151 residues: Methylated-DNA--protein-cysteine methyltransferase (151 aa).

The Nucleophile; methyl group acceptor role is filled by Cys-119.

It belongs to the MGMT family.

Its subcellular location is the cytoplasm. The catalysed reaction is a 6-O-methyl-2'-deoxyguanosine in DNA + L-cysteinyl-[protein] = S-methyl-L-cysteinyl-[protein] + a 2'-deoxyguanosine in DNA. It catalyses the reaction a 4-O-methyl-thymidine in DNA + L-cysteinyl-[protein] = a thymidine in DNA + S-methyl-L-cysteinyl-[protein]. Functionally, involved in the cellular defense against the biological effects of O6-methylguanine (O6-MeG) and O4-methylthymine (O4-MeT) in DNA. Repairs the methylated nucleobase in DNA by stoichiometrically transferring the methyl group to a cysteine residue in the enzyme. This is a suicide reaction: the enzyme is irreversibly inactivated. This Saccharolobus islandicus (strain Y.N.15.51 / Yellowstone #2) (Sulfolobus islandicus) protein is Methylated-DNA--protein-cysteine methyltransferase.